We begin with the raw amino-acid sequence, 833 residues long: Urease (833 aa).

The Urease domain occupies Gly395–Tyr833. Residues His400 and His402 each coordinate Ni(2+). 2 residues coordinate urea: His402 and Ala433. Lys483 contacts Ni(2+). Lys483 is modified (N6-carboxylysine). His485 and His512 together coordinate urea. Ni(2+) is bound by residues His512 and His538. Residue His586 is the Proton donor of the active site. Asp626 provides a ligand contact to Ni(2+). A urea-binding site is contributed by Ala629.

This sequence in the C-terminal section; belongs to the metallo-dependent hydrolases superfamily. Urease alpha subunit family. In terms of assembly, homohexamer. It depends on Ni(2+) as a cofactor. Post-translationally, carboxylation allows a single lysine to coordinate two nickel ions.

The enzyme catalyses urea + 2 H2O + H(+) = hydrogencarbonate + 2 NH4(+). It functions in the pathway nitrogen metabolism; urea degradation; CO(2) and NH(3) from urea (urease route): step 1/1. Its activity is regulated as follows. The urease accessory proteins URE4, URE6 and URE7 are required for urease activity, URE7 supplying nickel for the functional urease. Its function is as follows. Plays a nutritional role via nitrogen acquisition in the environment. Contributes to the central nervous system invasion by enhancing yeast sequestration within microcapillary beds (such as within the brain) during hematogenous spread, thereby facilitating blood-to-brain invasion by C.neoformans. Affects fitness within the mammalian phagosome, promoting non-lytic exocytosis while delaying intracellular replication and thus reducing phagolysosomal membrane damage, events that could facilitate cryptococcal dissemination when transported inside macrophages. Urease activity is also associated with the regulation of key intracellular metabolic pathways, including melanin biosynthesis, polyamine biosynthesis, as well as intracellular levels of proline and reactive oxygen species. The polypeptide is Urease (Cryptococcus neoformans var. grubii serotype A (strain H99 / ATCC 208821 / CBS 10515 / FGSC 9487) (Filobasidiella neoformans var. grubii)).